The sequence spans 398 residues: 1-deoxy-D-xylulose 5-phosphate reductoisomerase (398 aa).

Positions 11, 12, 13, 14, and 125 each coordinate NADPH. A 1-deoxy-D-xylulose 5-phosphate-binding site is contributed by Lys126. Residue Glu127 participates in NADPH binding. Mn(2+) is bound at residue Asp151. 1-deoxy-D-xylulose 5-phosphate contacts are provided by Ser152, Glu153, Ser186, and His209. Glu153 contacts Mn(2+). Residue Gly215 coordinates NADPH. Residues Ser222, Asn227, Lys228, and Glu231 each contribute to the 1-deoxy-D-xylulose 5-phosphate site. Residue Glu231 participates in Mn(2+) binding.

The protein belongs to the DXR family. Mg(2+) serves as cofactor. It depends on Mn(2+) as a cofactor.

It carries out the reaction 2-C-methyl-D-erythritol 4-phosphate + NADP(+) = 1-deoxy-D-xylulose 5-phosphate + NADPH + H(+). It participates in isoprenoid biosynthesis; isopentenyl diphosphate biosynthesis via DXP pathway; isopentenyl diphosphate from 1-deoxy-D-xylulose 5-phosphate: step 1/6. Its function is as follows. Catalyzes the NADPH-dependent rearrangement and reduction of 1-deoxy-D-xylulose-5-phosphate (DXP) to 2-C-methyl-D-erythritol 4-phosphate (MEP). The polypeptide is 1-deoxy-D-xylulose 5-phosphate reductoisomerase (Acinetobacter baumannii (strain ACICU)).